Consider the following 210-residue polypeptide: MSKFIVIEGLEGAGKSTAIKNVLATLAKHGITAPVTTREPGGTPLAEKMRELVKQGHPDEPLTDMAELLLLYAARAQLVGNVIKPALAAGNWVVGDRHDLSSQAYQGGGRGFDRELMATMKRTVLGDFTPDLTIYMDIDPKLGLQRASARGELDRIEQMKLDFFERSRERYLEFANNDESIITIDAGQDLDTVTASIIAALEIWLATNGN.

9-16 (GLEGAGKS) provides a ligand contact to ATP.

The protein belongs to the thymidylate kinase family.

It catalyses the reaction dTMP + ATP = dTDP + ADP. Its function is as follows. Phosphorylation of dTMP to form dTDP in both de novo and salvage pathways of dTTP synthesis. This is Thymidylate kinase from Aliivibrio salmonicida (strain LFI1238) (Vibrio salmonicida (strain LFI1238)).